A 290-amino-acid polypeptide reads, in one-letter code: Acetylglutamate kinase (290 aa).

Substrate-binding positions include 60–61, R82, and N187; that span reads GG.

The protein belongs to the acetylglutamate kinase family. ArgB subfamily.

The protein localises to the cytoplasm. It carries out the reaction N-acetyl-L-glutamate + ATP = N-acetyl-L-glutamyl 5-phosphate + ADP. It participates in amino-acid biosynthesis; L-arginine biosynthesis; N(2)-acetyl-L-ornithine from L-glutamate: step 2/4. In terms of biological role, catalyzes the ATP-dependent phosphorylation of N-acetyl-L-glutamate. This is Acetylglutamate kinase from Marinobacter nauticus (strain ATCC 700491 / DSM 11845 / VT8) (Marinobacter aquaeolei).